The following is a 712-amino-acid chain: Polyribonucleotide nucleotidyltransferase (712 aa).

The Mg(2+) site is built by D488 and D494. A KH domain is found at 555–614 (PKIETINIPTDKIREVIGSGGKVIREIVATTGAKVDINDDGVVKVSASDGAKIKAAIDWI). Residues 624 to 692 (GKIYDGKVVK…DRGKTKLSMK (69 aa)) enclose the S1 motif domain.

This sequence belongs to the polyribonucleotide nucleotidyltransferase family. Requires Mg(2+) as cofactor.

It is found in the cytoplasm. The catalysed reaction is RNA(n+1) + phosphate = RNA(n) + a ribonucleoside 5'-diphosphate. In terms of biological role, involved in mRNA degradation. Catalyzes the phosphorolysis of single-stranded polyribonucleotides processively in the 3'- to 5'-direction. In Caulobacter vibrioides (strain NA1000 / CB15N) (Caulobacter crescentus), this protein is Polyribonucleotide nucleotidyltransferase.